A 254-amino-acid polypeptide reads, in one-letter code: Casein kinase II subunit beta-2 (254 aa).

It belongs to the casein kinase 2 subunit beta family. In terms of assembly, tetramer composed of two alpha chains, one beta chain and one beta' chain. In terms of processing, phosphorylated by alpha subunit.

In terms of biological role, regulatory subunit of casein kinase II/CK2. As part of the kinase complex regulates the basal catalytic activity of the alpha subunit a constitutively active serine/threonine-protein kinase that phosphorylates a large number of substrates containing acidic residues C-terminal to the phosphorylated serine or threonine. The chain is Casein kinase II subunit beta-2 from Schizosaccharomyces pombe (strain 972 / ATCC 24843) (Fission yeast).